Here is a 365-residue protein sequence, read N- to C-terminus: Autoinducer 2-binding periplasmic protein LuxP (365 aa).

The signal sequence occupies residues 1–23 (MKKALLFSLISMVGFSPASQATQ).

The protein belongs to the bacterial solute-binding protein 2 family.

The protein localises to the periplasm. Binds to the signaling molecule autoinducer 2 (AI-2), a furanosyl borate diester, (3a-methyl-5,6-dihydrofuro-[2,3d][1,3,2]dioxaborole-2,2,6,6a-tetraol). This complex then interacts with the LuxQ sensor protein. The protein is Autoinducer 2-binding periplasmic protein LuxP (luxP) of Vibrio harveyi (Beneckea harveyi).